Reading from the N-terminus, the 409-residue chain is 2,3-bisphosphoglycerate-independent phosphoglycerate mutase (409 aa).

The interval 160–179 (ITDADPKHEGNKPKTVKPLD) is disordered.

It belongs to the BPG-independent phosphoglycerate mutase family. A-PGAM subfamily.

It carries out the reaction (2R)-2-phosphoglycerate = (2R)-3-phosphoglycerate. It functions in the pathway carbohydrate degradation; glycolysis; pyruvate from D-glyceraldehyde 3-phosphate: step 3/5. Functionally, catalyzes the interconversion of 2-phosphoglycerate and 3-phosphoglycerate. The chain is 2,3-bisphosphoglycerate-independent phosphoglycerate mutase from Methanosphaera stadtmanae (strain ATCC 43021 / DSM 3091 / JCM 11832 / MCB-3).